The chain runs to 723 residues: MFEEKASSPSGKMGGEEKPIGAGEEKQKEGGKKKNKEGSGDGGRAELNPWPEYIYTRLEMYNILKAEHDSILAEKAEKDSKPIKVTLPDGKQVDAESWKTTPYQIACGISQGLADNTVIAKVNNVVWDLDRPLEEDCTLELLKFEDEEAQAVYWHSSAHIMGEAMERVYGGCLCYGPPIENGFYYDMYLEEGGVSSNDFSSLEALCKKIIKEKQAFERLEVKKETLLAMFKYNKFKCRILNEKVNTPTTTVYRCGPLIDLCRGPHVRHTGKIKALKIHKNSSTYWEGKADMETLQRIYGISFPDPKMLKEWEKFQEEAKNRDHRKIGRDQELYFFHELSPGSCFFLPKGAYIYNALIEFIRSEYRKRGFQEVVTPNIFNSRLWMTSGHWQHYSENMFSFEVEKELFALKPMNCPGHCLMFDHRPRSWRELPLRLADFGVLHRNELSGALTGLTRVRRFQQDDAHIFCAMEQIEDEIKGCLDFLRTVYSVFGFSFKLNLSTRPEKFLGDIEVWDQAEKQLENSLNEFGEKWELNSGDGAFYGPKIDIQIKDAIGRYHQCATIQLDFQLPIRFNLTYVSHDGDDKKRPVIVHRAILGSVERMIAILTENYGGKWPFWLSPRQVMVVPVGPTCDEYAQKVRQQFHDAKFMADIDLDPGCTLNKKIRNAQLAQYNFILVVGEKEKISGTVNIRTRDNKVHGERTISETIERLQQLKEFRSKQAEEEF.

The tract at residues methionine 1 to glutamate 46 is disordered. Basic and acidic residues predominate over residues glycine 14–serine 39. At serine 39 the chain carries Phosphoserine. One can recognise a TGS domain in the interval aspartate 79–lysine 143. The residue at position 243 (lysine 243) is an N6-acetyllysine. Threonine 246 carries the post-translational modification Phosphothreonine. Residue tyrosine 298 is modified to Phosphotyrosine. Threonine 453 carries the post-translational modification Phosphothreonine. Serine 702 carries the phosphoserine modification.

It belongs to the class-II aminoacyl-tRNA synthetase family. In terms of assembly, homodimer. In terms of processing, ISGylated.

The protein localises to the cytoplasm. The enzyme catalyses tRNA(Thr) + L-threonine + ATP = L-threonyl-tRNA(Thr) + AMP + diphosphate + H(+). Inhibited by borrelidin (BN, IC 50 is 7 nM), which binds to 4 distinct subsites in the protein, preventing binding of all 3 substrates. Its function is as follows. Catalyzes the attachment of threonine to tRNA(Thr) in a two-step reaction: threonine is first activated by ATP to form Thr-AMP and then transferred to the acceptor end of tRNA(Thr). Also edits incorrectly charged tRNA(Thr) via its editing domain, at the post-transfer stage. The sequence is that of Threonine--tRNA ligase 1, cytoplasmic from Homo sapiens (Human).